The following is a 444-amino-acid chain: MSQSYINVVGAGLAGSEAAYQIAKRGIPVKLYEMRGVKRTPQHKTSNFAELVCSNSFRGDSLTNAVGLLKEEMRRLDSIIMRTGEAHRVPAGGAMAVDRSGYAQAVTAELENNPLIQVIRNEVTEIPDDAITVIATGPLTSDSLAKKIYKLNGGEGFYFYDAAAPIVDQSSIDMDKVYLKSRYDKGEAAYLNCPMTKEEFIRFYEALINAEEAPFNSFEREKYFEGCMPIEVMAKRGIKTLLYGPMKPVGLEYPQDYKGPRDGDYKAPYAVVQLRQDNAAGSLYNIVGFQTHLKWSEQKRVFSMIPGLEQAHFVRYGVMHRNSYIDSPNLLAPTFATCKNPNLFFAGQMTGVEGYVESAASGLVAGINAVRRFKDEEAVIFPQTTAIGALPYYITHTKSKHFQPMNINFGIIKDLGGPRIRDKKKRYEKIAERSLKDLQQFLTV.

10–15 (GAGLAG) contacts FAD.

It belongs to the MnmG family. TrmFO subfamily. The cofactor is FAD.

It localises to the cytoplasm. It carries out the reaction uridine(54) in tRNA + (6R)-5,10-methylene-5,6,7,8-tetrahydrofolate + NADH + H(+) = 5-methyluridine(54) in tRNA + (6S)-5,6,7,8-tetrahydrofolate + NAD(+). The enzyme catalyses uridine(54) in tRNA + (6R)-5,10-methylene-5,6,7,8-tetrahydrofolate + NADPH + H(+) = 5-methyluridine(54) in tRNA + (6S)-5,6,7,8-tetrahydrofolate + NADP(+). In terms of biological role, catalyzes the folate-dependent formation of 5-methyl-uridine at position 54 (M-5-U54) in all tRNAs. The protein is Methylenetetrahydrofolate--tRNA-(uracil-5-)-methyltransferase TrmFO of Streptococcus mutans serotype c (strain ATCC 700610 / UA159).